A 175-amino-acid chain; its full sequence is Inosine/xanthosine triphosphatase (175 aa).

8 to 13 (TTNPAK) is a binding site for substrate. Residues Asp-38 and Glu-68 each contribute to the Mg(2+) site. 68 to 69 (EA) is a binding site for substrate.

The protein belongs to the YjjX NTPase family. As to quaternary structure, homodimer. It depends on Mg(2+) as a cofactor. Requires Mn(2+) as cofactor.

It catalyses the reaction XTP + H2O = XDP + phosphate + H(+). It carries out the reaction ITP + H2O = IDP + phosphate + H(+). Functionally, phosphatase that hydrolyzes non-canonical purine nucleotides such as XTP and ITP to their respective diphosphate derivatives. Probably excludes non-canonical purines from DNA/RNA precursor pool, thus preventing their incorporation into DNA/RNA and avoiding chromosomal lesions. This Yersinia enterocolitica serotype O:8 / biotype 1B (strain NCTC 13174 / 8081) protein is Inosine/xanthosine triphosphatase.